A 138-amino-acid chain; its full sequence is Large ribosomal subunit protein uL16 (138 aa).

Residues 1-13 are compositionally biased toward basic residues; sequence MLQPKRRKYRKEQ. The disordered stretch occupies residues 1-20; that stretch reads MLQPKRRKYRKEQKGRNTGI.

It belongs to the universal ribosomal protein uL16 family. Part of the 50S ribosomal subunit.

Functionally, binds 23S rRNA and is also seen to make contacts with the A and possibly P site tRNAs. The protein is Large ribosomal subunit protein uL16 of Burkholderia mallei (strain NCTC 10247).